The primary structure comprises 1118 residues: Constitutive coactivator of PPAR-gamma-like protein 1 (1118 aa).

Residues 339–405 (PPHYLAARPG…SLSEPAPLTL (67 aa)) form an interaction with YES1, SRC and FYN region. Residues 374-533 (AKPVAPQVPS…GTVQPIPCLL (160 aa)) are disordered. A compositionally biased stretch (low complexity) spans 376 to 396 (PVAPQVPSPGGAPGQGPYPYS). Composition is skewed to polar residues over residues 405 to 420 (LDTSGKNLTEQNSYSN) and 435 to 447 (SPINPAQSGSPNH). Residues 481 to 502 (GWEKTGSHSEPQARGDPGDQTK) are compositionally biased toward basic and acidic residues. Over residues 503–514 (AEGSSTASSGSQ) the composition is skewed to polar residues. A Phosphothreonine modification is found at threonine 655. The tract at residues 829 to 1118 (ADQAAKVEKM…LEAAVLNKEE (290 aa)) is RNA binding. Residues arginine 873, arginine 884, and arginine 886 each carry the omega-N-methylarginine modification. The segment at 921–945 (AFSGSDSSRTSKSQGGVQPIPSQGG) is disordered. A compositionally biased stretch (polar residues) spans 924 to 936 (GSDSSRTSKSQGG). Residue lysine 932 is modified to N6-acetyllysine. Residue serine 960 is modified to Phosphoserine. 2 positions are modified to omega-N-methylarginine: arginine 982 and arginine 986. Serine 1023 is modified (phosphoserine). The segment at 1025-1102 (EEVAKELKSK…HLNALSTDSA (78 aa)) is disordered. A compositionally biased stretch (basic and acidic residues) spans 1026 to 1037 (EVAKELKSKSGE). Positions 1038-1051 (SKSSAMSSDGSLAE) are enriched in low complexity. Phosphoserine occurs at positions 1044, 1045, and 1048. Residues 1076 to 1101 (HSESALNNDSKTCNTNPHLNALSTDS) show a composition bias toward polar residues.

Belongs to the constitutive coactivator of PPAR-gamma family. As to quaternary structure, interacts with PURA. Interacts with SRC family protein kinases YES1, SRC and FYN. Upon tyrosine phosphorylation, interacts with PIK3R1. Interacts with IGF2BP1/IMP-1 in an RNA-dependent manner. In terms of processing, arg-982 is dimethylated, probably to asymmetric dimethylarginine. Post-translationally, phosphorylated on tyrosine by SRC family protein kinases upon oxidative stress, for instance following UV irradiation. As to expression, widely expressed. In gastric mucosa, detected in the bottom region of the foveolar epithelium (at protein level).

The protein resides in the cytoplasm. The protein localises to the cell membrane. In terms of biological role, component of the oxidative stress-induced survival signaling. May regulate the activation of SRC family protein kinases. May act as a scaffolding protein enabling SRC family protein kinases to phosphorylate and activate PI3-kinase. Binds IGF2 RNA and promotes the production of IGF2 protein. This is Constitutive coactivator of PPAR-gamma-like protein 1 (FAM120A) from Homo sapiens (Human).